We begin with the raw amino-acid sequence, 443 residues long: Trihelix transcription factor ASIL2 (443 aa).

Residues Met1–Asp82 form a disordered region. The span at Tyr38 to Gln48 shows a compositional bias: polar residues. Residues Ser64–Gly78 show a composition bias toward gly residues. A Myb-like domain is found at Trp84–Lys144. Disordered regions lie at residues Phe238 to Trp350 and Arg413 to Asn443. Residues Gly239–Ser249 show a composition bias toward gly residues. Over residues Thr271 to Gly286 the composition is skewed to low complexity. Positions Lys290 to Arg303 match the Bipartite nuclear localization signal motif. Residues Met333 to Trp350 show a composition bias toward basic and acidic residues. The stretch at Phe360–Arg414 forms a coiled coil. Over residues Asn428–Asn443 the composition is skewed to low complexity.

Its subcellular location is the nucleus. Functionally, transcription regulator that may repress the maturation program during early embryogenesis. In Arabidopsis thaliana (Mouse-ear cress), this protein is Trihelix transcription factor ASIL2.